Consider the following 312-residue polypeptide: Ribosomal protein L11 methyltransferase (312 aa).

4 residues coordinate S-adenosyl-L-methionine: threonine 160, glycine 181, aspartate 203, and asparagine 246.

Belongs to the methyltransferase superfamily. PrmA family.

Its subcellular location is the cytoplasm. The catalysed reaction is L-lysyl-[protein] + 3 S-adenosyl-L-methionine = N(6),N(6),N(6)-trimethyl-L-lysyl-[protein] + 3 S-adenosyl-L-homocysteine + 3 H(+). Functionally, methylates ribosomal protein L11. The chain is Ribosomal protein L11 methyltransferase from Staphylococcus aureus (strain JH1).